The following is a 162-amino-acid chain: CASP-like protein BLE3 (162 aa).

Topologically, residues 1 to 7 (MAKVHRL) are cytoplasmic. The helical transmembrane segment at 8–28 (MNAVLRLAAAAAAATAAVVMV) threads the bilayer. The Extracellular segment spans residues 29–50 (TSRETTSFFGIQMEAKYSYTPS). Residues 51 to 71 (FIFFVVAYAVAAAYSLLVLAV) form a helical membrane-spanning segment. At 72–85 (PAGSALSRLALTTD) the chain is on the cytoplasmic side. A helical membrane pass occupies residues 86–106 (VVLGMVLAGAVASAGAISDIA). Topologically, residues 107 to 128 (KNGNSHAGWLPVCGQIHAYCNH) are extracellular. A helical transmembrane segment spans residues 129–149 (VMAALIAGFVALAVHFVVVMY). Residues 150–162 (SLHIVTDVICPCH) are Cytoplasmic-facing.

It belongs to the Casparian strip membrane proteins (CASP) family. Homodimer and heterodimers.

It localises to the cell membrane. Functionally, involved in cell elongation in rice through dual regulation by brassinolide and auxin. The protein is CASP-like protein BLE3 (BLE3) of Oryza sativa subsp. indica (Rice).